Reading from the N-terminus, the 689-residue chain is Chloride channel protein ClC-Kb (689 aa).

The Cytoplasmic segment spans residues 1–51 (MSRVLVIEQREGEEKTLIQKHIFRPFPNTRRVVIDHLQRLKNFLFRIGDDW). 2 consecutive transmembrane segments (helical) span residues 52 to 83 (YFLF…RWLQ) and 92 to 112 (LRYL…TGFA). The segment at residues 117 to 128 (PHSGGSGIPELK) is an intramembrane region (helical). Ser-122 is a chloride binding site. Transmembrane regions (helical) follow at residues 142-161 (IKNF…AGST) and 162-181 (MFLG…AAYL). An N-linked (GlcNAc...) asparagine glycan is attached at Asn-194. The helical intramembrane region spans 204–225 (AAAAVGVSTVFGAPISGVLFSV). A helical membrane pass occupies residues 237–256 (YWRGFFAATCGAFVFRLLAV). Ca(2+) is bound by residues Glu-260, Glu-262, Asp-279, and Glu-282. 2 helical membrane passes run 283-311 (MFFF…LGYV) and 326-343 (PMYS…TFPE). The segment at residues 350-361 (ASRLTMKELLTS) is an intramembrane region (helical). 2 helical membrane passes run 402–422 (GTLA…TTLP) and 423–442 (MPAG…GRLV). Chloride is bound at residue Phe-428. The segment at residues 466 to 498 (GGYAWQGAPAYSGAVTHSVSTALLAFEATGQIA) is an intramembrane region (helical). The chain crosses the membrane as a helical span at residues 502-522 (PVILCVLIANAFTQKLQPSFY). Over 523-689 (DGTIIVKKLP…KAIEDLANPK (167 aa)) the chain is Cytoplasmic. CBS domains are found at residues 553–613 (MNPD…SHER) and 630–689 (ACSI…ANPK).

This sequence belongs to the chloride channel (TC 2.A.49) family. In terms of processing, N-glycosylated on a single asparagine, probably Asn-365 or Asn-375. As to expression, expressed in two distinct regions of the kidney; the proximal convoluted tubule and the diluting segment.

It is found in the cell membrane. Its function is as follows. Voltage-gated chloride channel. Chloride channels have several functions including the regulation of cell volume, the stabilization of membrane potential, signal transduction and transepithelial transport. This is Chloride channel protein ClC-Kb (clcnkb) from Xenopus laevis (African clawed frog).